The chain runs to 319 residues: tRNA U34 carboxymethyltransferase (319 aa).

Carboxy-S-adenosyl-L-methionine-binding positions include K88, W102, K107, G126, 176 to 177 (LE), M192, Y196, and R311.

The protein belongs to the class I-like SAM-binding methyltransferase superfamily. CmoB family. As to quaternary structure, homotetramer.

The catalysed reaction is carboxy-S-adenosyl-L-methionine + 5-hydroxyuridine(34) in tRNA = 5-carboxymethoxyuridine(34) in tRNA + S-adenosyl-L-homocysteine + H(+). In terms of biological role, catalyzes carboxymethyl transfer from carboxy-S-adenosyl-L-methionine (Cx-SAM) to 5-hydroxyuridine (ho5U) to form 5-carboxymethoxyuridine (cmo5U) at position 34 in tRNAs. The sequence is that of tRNA U34 carboxymethyltransferase from Pseudomonas savastanoi pv. phaseolicola (strain 1448A / Race 6) (Pseudomonas syringae pv. phaseolicola (strain 1448A / Race 6)).